A 321-amino-acid polypeptide reads, in one-letter code: Biotin synthase (321 aa).

A Radical SAM core domain is found at R44 to R270. Residues C59, C63, and C66 each coordinate [4Fe-4S] cluster. The [2Fe-2S] cluster site is built by C103, C135, C195, and R265.

It belongs to the radical SAM superfamily. Biotin synthase family. Homodimer. Requires [4Fe-4S] cluster as cofactor. It depends on [2Fe-2S] cluster as a cofactor.

It catalyses the reaction (4R,5S)-dethiobiotin + (sulfur carrier)-SH + 2 reduced [2Fe-2S]-[ferredoxin] + 2 S-adenosyl-L-methionine = (sulfur carrier)-H + biotin + 2 5'-deoxyadenosine + 2 L-methionine + 2 oxidized [2Fe-2S]-[ferredoxin]. It participates in cofactor biosynthesis; biotin biosynthesis; biotin from 7,8-diaminononanoate: step 2/2. Its function is as follows. Catalyzes the conversion of dethiobiotin (DTB) to biotin by the insertion of a sulfur atom into dethiobiotin via a radical-based mechanism. The protein is Biotin synthase of Magnetococcus marinus (strain ATCC BAA-1437 / JCM 17883 / MC-1).